Here is a 426-residue protein sequence, read N- to C-terminus: Glutamate-1-semialdehyde 2,1-aminomutase (426 aa).

K265 is modified (N6-(pyridoxal phosphate)lysine).

It belongs to the class-III pyridoxal-phosphate-dependent aminotransferase family. HemL subfamily. As to quaternary structure, homodimer. Requires pyridoxal 5'-phosphate as cofactor.

Its subcellular location is the cytoplasm. It carries out the reaction (S)-4-amino-5-oxopentanoate = 5-aminolevulinate. It participates in porphyrin-containing compound metabolism; protoporphyrin-IX biosynthesis; 5-aminolevulinate from L-glutamyl-tRNA(Glu): step 2/2. This is Glutamate-1-semialdehyde 2,1-aminomutase from Salmonella agona (strain SL483).